We begin with the raw amino-acid sequence, 699 residues long: Elongation factor G (699 aa).

The 281-residue stretch at 8–288 (EDYRNFGIMA…AVVDYLPSPM (281 aa)) folds into the tr-type G domain. GTP is bound by residues 17 to 24 (AHIDAGKT), 86 to 90 (DTPGH), and 140 to 143 (NKMD).

It belongs to the TRAFAC class translation factor GTPase superfamily. Classic translation factor GTPase family. EF-G/EF-2 subfamily.

The protein localises to the cytoplasm. In terms of biological role, catalyzes the GTP-dependent ribosomal translocation step during translation elongation. During this step, the ribosome changes from the pre-translocational (PRE) to the post-translocational (POST) state as the newly formed A-site-bound peptidyl-tRNA and P-site-bound deacylated tRNA move to the P and E sites, respectively. Catalyzes the coordinated movement of the two tRNA molecules, the mRNA and conformational changes in the ribosome. In Rhizobium johnstonii (strain DSM 114642 / LMG 32736 / 3841) (Rhizobium leguminosarum bv. viciae), this protein is Elongation factor G.